The chain runs to 251 residues: Fibroblast growth factor 23 (251 aa).

An N-terminal signal peptide occupies residues 1–24 (MLGACLRLLVGALCTVCSLGTARA). Cysteine 95 and cysteine 113 are disulfide-bonded. Residues threonine 171 and threonine 178 are each glycosylated (O-linked (GalNAc) threonine). Residues 175 to 251 (RRHTRSAEDP…DRCRPFPRFV (77 aa)) form a disordered region. The span at 179–189 (RSAEDPPERDP) shows a compositional bias: basic and acidic residues. At serine 180 the chain carries Phosphoserine; by FAM20C.

It belongs to the heparin-binding growth factors family. As to quaternary structure, interacts with FGFR1, FGFR2, FGFR3 and FGFR4. Affinity between fibroblast growth factors (FGFs) and their receptors is increased by KL and heparan sulfate glycosaminoglycans that function as coreceptors. In terms of processing, following secretion this protein is inactivated by cleavage into a N-terminal fragment and a C-terminal fragment. The processing is effected by proprotein convertases. Post-translationally, O-glycosylated at Thr-171 and Thr-178 by GALNT3 and glycosylation of Thr-178 requires previous glycosylation at Thr171. Glycosylation is necessary for secretion; it blocks processing by proprotein convertases when the O-glycan is alpha 2,6-sialylated. Competition between proprotein convertase cleavage and block of cleavage by O-glycosylation determines the level of secreted active FGF23. Phosphorylation at Ser-180 mediated by FAM20C slows down glycosylation at Thr-178 notably. As to expression, expressed in the parathyroid.

Its subcellular location is the secreted. Its function is as follows. Regulator of phosphate homeostasis. Inhibits renal tubular phosphate transport by reducing SLC34A1 levels. Regulator of vitamin-D metabolism. Negatively regulates osteoblasts differentiation and matrix mineralization. Acts directly on the parathyroid to decrease PTH secretion. Up-regulates EGR1 expression in the presence of KL. This is Fibroblast growth factor 23 (Fgf23) from Rattus norvegicus (Rat).